The primary structure comprises 171 residues: Squamosa promoter-binding protein 2 (171 aa).

Disordered stretches follow at residues 20–46 and 57–76; these read GDEG…VVKV and KLNL…TASG. Residues 22-40 are compositionally biased toward acidic residues; the sequence is EGSDFEEEEEGEDEEEEEQ. Residues 82–159 form an SBP-type zinc finger; the sequence is QPCCLVENCG…AGHNERRRKS (78 aa). Zn(2+) contacts are provided by C85, C90, C107, H110, C126, C129, H133, and C145. Residues 142 to 158 carry the Bipartite nuclear localization signal motif; sequence KRSCRRRLAGHNERRRK. Residues 149–158 are compositionally biased toward basic residues; that stretch reads LAGHNERRRK. Positions 149-171 are disordered; sequence LAGHNERRRKSSLESHKEGRSPR. The span at 159 to 171 shows a compositional bias: basic and acidic residues; sequence SSLESHKEGRSPR.

Its subcellular location is the nucleus. In terms of biological role, probable transcriptional factor. Binds to the promoter of the SQUAMOSA gene. This Antirrhinum majus (Garden snapdragon) protein is Squamosa promoter-binding protein 2 (SBP2).